The sequence spans 349 residues: Heat-inducible transcription repressor HrcA (349 aa).

It belongs to the HrcA family.

Functionally, negative regulator of class I heat shock genes (grpE-dnaK-dnaJ and groELS operons). Prevents heat-shock induction of these operons. The polypeptide is Heat-inducible transcription repressor HrcA (Xylella fastidiosa (strain 9a5c)).